We begin with the raw amino-acid sequence, 765 residues long: Probable glycosyltransferase STELLO2 (765 aa).

The Cytoplasmic portion of the chain corresponds to 1-43 (MLVQDRVAPKPPKSRIRELPSRDRFAEPKILDFSSWVSDNVYR). The chain crosses the membrane as a helical span at residues 44-64 (IVIIFLFIVTVAAFFFLYNTT). At 65-765 (DTASLLCFQS…EGDPLLMELV (701 aa)) the chain is on the lumenal side. Asn235 and Asn723 each carry an N-linked (GlcNAc...) asparagine glycan.

The protein belongs to the STELLO family. Homo- and heterodimer with STL1. Interacts with CESA1, CESA3, CESA4, CESA6, CESA7 and CESA8, but not with GOT1. As to expression, expressed in cells that are expanding or producing secondary cell walls.

The protein resides in the golgi apparatus membrane. In terms of biological role, probable glycosyltransferase regulating the assembly and trafficking of cellulose synthase complexes. The protein is Probable glycosyltransferase STELLO2 of Arabidopsis thaliana (Mouse-ear cress).